The chain runs to 365 residues: Probable caffeine synthase 5 (365 aa).

Tyr-18 contributes to the S-adenosyl-L-homocysteine binding site. Residue Thr-25 coordinates caffeine. Residues Cys-61, Asn-66, Asp-98, Leu-99, Ser-134, and Phe-135 each coordinate S-adenosyl-L-homocysteine. Positions 152, 155, and 156 each coordinate caffeine. Positions 173, 259, 261, and 262 each coordinate Mg(2+). Position 317 (Phe-317) interacts with caffeine.

It belongs to the methyltransferase superfamily. Type-7 methyltransferase family. Requires Mg(2+) as cofactor.

Its pathway is alkaloid biosynthesis. In terms of biological role, may be involved in the biosynthesis of caffeine. This is Probable caffeine synthase 5 from Camellia sinensis (Tea plant).